Reading from the N-terminus, the 245-residue chain is MRQKLVIGNWKMHGSLAANAALLEGIKAAPARARLAVCAPFPYLAQCQALLNGSQVAWGAQDVSAEARGAFTGEVAASMLGEFGCTYALVGHSERRTYHGESDAVVAAKALRALEFGIIPVICVGETLAQREAGETEVVVGRQLQAALDALSVEQLGRVVLAYEPVWAIGTGKTASSEQAQAVHAFLRAEVRERDAGVADRMAILYGGSVKPDNAAELFSMSDIDGGLIGGASLKSEDFLAIGNA.

Position 9 to 11 (9 to 11 (NWK)) interacts with substrate. The Electrophile role is filled by His-92. The active-site Proton acceptor is the Glu-164. Residues Gly-170, Ser-209, and 230–231 (GG) each bind substrate.

The protein belongs to the triosephosphate isomerase family. As to quaternary structure, homodimer.

It localises to the cytoplasm. The enzyme catalyses D-glyceraldehyde 3-phosphate = dihydroxyacetone phosphate. It functions in the pathway carbohydrate biosynthesis; gluconeogenesis. The protein operates within carbohydrate degradation; glycolysis; D-glyceraldehyde 3-phosphate from glycerone phosphate: step 1/1. In terms of biological role, involved in the gluconeogenesis. Catalyzes stereospecifically the conversion of dihydroxyacetone phosphate (DHAP) to D-glyceraldehyde-3-phosphate (G3P). In Cupriavidus pinatubonensis (strain JMP 134 / LMG 1197) (Cupriavidus necator (strain JMP 134)), this protein is Triosephosphate isomerase.